We begin with the raw amino-acid sequence, 251 residues long: MSEDTSNSTHFGYKTIEAEKKADLVAGVFHSVAAKYDIMNDVMSFGIHRMWKRFTIESAGARPGMKVLDLAGGTGDLTAKFSRIIGDTGQVTLADINDSMLKVGREKLRDKGIVGNVNYVQANAEALPFPDNHFDIITIAFGLRNVTDKDAAIASMLRVLKPGGKLLVLEFSKPQHDIMRKVYDLYSFKVLPKMGSLITKDADSYEYLAESIRMHPDQDTLKQMMEDAGFEQVNYTNMTDGIVALHKGYKF.

S-adenosyl-L-methionine-binding positions include T74, D95, and N123 to A124.

This sequence belongs to the class I-like SAM-binding methyltransferase superfamily. MenG/UbiE family.

The catalysed reaction is a 2-demethylmenaquinol + S-adenosyl-L-methionine = a menaquinol + S-adenosyl-L-homocysteine + H(+). It catalyses the reaction a 2-methoxy-6-(all-trans-polyprenyl)benzene-1,4-diol + S-adenosyl-L-methionine = a 5-methoxy-2-methyl-3-(all-trans-polyprenyl)benzene-1,4-diol + S-adenosyl-L-homocysteine + H(+). Its pathway is quinol/quinone metabolism; menaquinone biosynthesis; menaquinol from 1,4-dihydroxy-2-naphthoate: step 2/2. The protein operates within cofactor biosynthesis; ubiquinone biosynthesis. Methyltransferase required for the conversion of demethylmenaquinol (DMKH2) to menaquinol (MKH2) and the conversion of 2-polyprenyl-6-methoxy-1,4-benzoquinol (DDMQH2) to 2-polyprenyl-3-methyl-6-methoxy-1,4-benzoquinol (DMQH2). The chain is Ubiquinone/menaquinone biosynthesis C-methyltransferase UbiE from Shewanella halifaxensis (strain HAW-EB4).